Here is a 166-residue protein sequence, read N- to C-terminus: Ribonuclease H (166 aa).

Residues 5-147 (PRKRVALFTD…VDREARRQAQ (143 aa)) enclose the RNase H type-1 domain. Mg(2+) is bound by residues Asp-14, Glu-52, Asp-74, and Asp-139. Residues 128 to 166 (GHTGHPENERVDREARRQAQSQAKTPCPPRAPTLFHEEA) are disordered. Positions 131–144 (GHPENERVDREARR) are enriched in basic and acidic residues.

Belongs to the RNase H family. As to quaternary structure, monomer. It depends on Mg(2+) as a cofactor.

It catalyses the reaction Endonucleolytic cleavage to 5'-phosphomonoester.. Functionally, endonuclease that specifically degrades the RNA of RNA-DNA hybrids. In Thermus thermophilus (strain ATCC 27634 / DSM 579 / HB8), this protein is Ribonuclease H (rnhA).